The sequence spans 341 residues: Thiamine-phosphate synthase (341 aa).

The unknown stretch occupies residues Met1–Arg123. The segment at Ala61 to Val80 is disordered. Residues Val124 to Gly341 form a thiamine-phosphate synthase region. 4-amino-2-methyl-5-(diphosphooxymethyl)pyrimidine-binding positions include Gln171 to Lys175 and Asn203. Positions 204 and 223 each coordinate Mg(2+). 4-amino-2-methyl-5-(diphosphooxymethyl)pyrimidine is bound at residue Ser242. Thr268 to Thr270 lines the 2-[(2R,5Z)-2-carboxy-4-methylthiazol-5(2H)-ylidene]ethyl phosphate pocket. Residue Lys271 coordinates 4-amino-2-methyl-5-(diphosphooxymethyl)pyrimidine. Gly298 lines the 2-[(2R,5Z)-2-carboxy-4-methylthiazol-5(2H)-ylidene]ethyl phosphate pocket.

Belongs to the thiamine-phosphate synthase family. Mg(2+) serves as cofactor.

It catalyses the reaction 2-[(2R,5Z)-2-carboxy-4-methylthiazol-5(2H)-ylidene]ethyl phosphate + 4-amino-2-methyl-5-(diphosphooxymethyl)pyrimidine + 2 H(+) = thiamine phosphate + CO2 + diphosphate. The catalysed reaction is 2-(2-carboxy-4-methylthiazol-5-yl)ethyl phosphate + 4-amino-2-methyl-5-(diphosphooxymethyl)pyrimidine + 2 H(+) = thiamine phosphate + CO2 + diphosphate. It carries out the reaction 4-methyl-5-(2-phosphooxyethyl)-thiazole + 4-amino-2-methyl-5-(diphosphooxymethyl)pyrimidine + H(+) = thiamine phosphate + diphosphate. The protein operates within cofactor biosynthesis; thiamine diphosphate biosynthesis; thiamine phosphate from 4-amino-2-methyl-5-diphosphomethylpyrimidine and 4-methyl-5-(2-phosphoethyl)-thiazole: step 1/1. In terms of biological role, condenses 4-methyl-5-(beta-hydroxyethyl)thiazole monophosphate (THZ-P) and 2-methyl-4-amino-5-hydroxymethyl pyrimidine pyrophosphate (HMP-PP) to form thiamine monophosphate (TMP). The sequence is that of Thiamine-phosphate synthase from Gloeobacter violaceus (strain ATCC 29082 / PCC 7421).